Here is a 390-residue protein sequence, read N- to C-terminus: S-adenosylmethionine synthase 3 (390 aa).

E9 serves as a coordination point for Mg(2+). H15 contributes to the ATP binding site. E43 lines the K(+) pocket. L-methionine is bound by residues E56 and Q99. Residues 167-169 (DGK), 235-238 (SGRF), D246, 252-253 (RK), A269, K273, and K277 contribute to the ATP site. D246 contributes to the L-methionine binding site. K277 serves as a coordination point for L-methionine.

It belongs to the AdoMet synthase family. Homotetramer. It depends on Mn(2+) as a cofactor. Mg(2+) is required as a cofactor. Requires Co(2+) as cofactor. The cofactor is K(+). As to expression, mostly expressed in stems and leaves.

It is found in the cytoplasm. The enzyme catalyses L-methionine + ATP + H2O = S-adenosyl-L-methionine + phosphate + diphosphate. Its pathway is amino-acid biosynthesis; S-adenosyl-L-methionine biosynthesis; S-adenosyl-L-methionine from L-methionine: step 1/1. Catalyzes the formation of S-adenosylmethionine from methionine and ATP. The reaction comprises two steps that are both catalyzed by the same enzyme: formation of S-adenosylmethionine (AdoMet) and triphosphate, and subsequent hydrolysis of the triphosphate. The sequence is that of S-adenosylmethionine synthase 3 (SAM3) from Solanum lycopersicum (Tomato).